Consider the following 247-residue polypeptide: Transmembrane protein 33 (247 aa).

The residue at position 2 (alanine 2) is an N-acetylalanine. Residues 2-31 are Lumenal-facing; it reads ADTTPNGPQGAGAVQFMMTNKLDTAMWLSR. A helical transmembrane segment spans residues 32 to 52; sequence LFTVYCSALFVLPLLGLHEAA. Residues 53 to 100 are Cytoplasmic-facing; the sequence is SFYQRALLANALTSALRLHQRLPHFQLSRAFLAQALLEDSCHYLLYSL. Residues 101–121 traverse the membrane as a helical segment; the sequence is IFVNSYPVTMSIFPVLLFSLL. Residues 122 to 155 are Lumenal-facing; it reads HAATYTKKVLDAKGSNSLPLLRSVLDKLSTNQQN. A helical membrane pass occupies residues 156-176; sequence ILKFIACNEIFLMPATVFMLF. Over 177–247 the chain is Cytoplasmic; sequence SGQGSLLQPF…FISRLAPTVA (71 aa).

It belongs to the PER33/POM33 family. As to quaternary structure, interacts with EIF2AK3. Interacts with ARL6IP1, isoform RTN1-A of RTN1, isoform RTN2-B of RTN2, isoform 3 of RTN3 and isoform 3 of RTN4. Interacts with RNF5. Interacts with RNF26. Interacts with PKD2. In terms of tissue distribution, highly expressed in the liver and significantly in brain, lungs and kidneys.

The protein resides in the endoplasmic reticulum membrane. The protein localises to the melanosome. It is found in the nucleus envelope. In terms of biological role, acts as a regulator of the tubular endoplasmic reticulum (ER) network by modulating intracellular calcium homeostasis. Mechanistically, stimulates PKD2 calcium-dependent activity. Suppresses the RTN3/4-induced formation of the ER tubules. Positively regulates PERK-mediated and IRE1-mediated unfolded protein response signaling. Plays an essential role in VEGF-mediated release of Ca(2+) from ER stores during angiogenesis. Also plays a role in the modulation of innate immune signaling through the cGAS-STING pathway by interacting with RNF26. Participates in lipid metabolism by acting as a downstream effector of the pyruvate kinase/PKM. Forms a complex with RNF5 to facilitate polyubiquitination and subsequent degradation of SCAP on the ER membrane. The chain is Transmembrane protein 33 (Tmem33) from Rattus norvegicus (Rat).